A 287-amino-acid polypeptide reads, in one-letter code: ATP synthase gamma chain (287 aa).

This sequence belongs to the ATPase gamma chain family. In terms of assembly, F-type ATPases have 2 components, CF(1) - the catalytic core - and CF(0) - the membrane proton channel. CF(1) has five subunits: alpha(3), beta(3), gamma(1), delta(1), epsilon(1). CF(0) has three main subunits: a, b and c.

The protein resides in the cell membrane. Functionally, produces ATP from ADP in the presence of a proton gradient across the membrane. The gamma chain is believed to be important in regulating ATPase activity and the flow of protons through the CF(0) complex. This chain is ATP synthase gamma chain, found in Bacillus caldotenax.